A 267-amino-acid polypeptide reads, in one-letter code: Thiamine thiazole synthase (267 aa).

NAD(+)-binding positions include S47, 66 to 67 (ER), G74, V138, and 164 to 166 (HID). Residues D166 and H181 each coordinate Fe cation. The NAD(+) site is built by S184 and M230. Glycine is bound at residue R240.

The protein belongs to the THI4 family. In terms of assembly, homooctamer; tetramer of dimers. Requires Fe(2+) as cofactor.

The enzyme catalyses hydrogen sulfide + glycine + NAD(+) = ADP-5-ethyl-4-methylthiazole-2-carboxylate + nicotinamide + 3 H2O + H(+). It functions in the pathway cofactor biosynthesis; thiamine diphosphate biosynthesis. Its function is as follows. Involved in the biosynthesis of the thiazole moiety of thiamine. Catalyzes the conversion of NAD and glycine to adenosine diphosphate 5-(2-hydroxyethyl)-4-methylthiazole-2-carboxylate (ADT), an adenylated thiazole intermediate, using free sulfide as a source of sulfur. In Methanocaldococcus jannaschii (strain ATCC 43067 / DSM 2661 / JAL-1 / JCM 10045 / NBRC 100440) (Methanococcus jannaschii), this protein is Thiamine thiazole synthase.